Here is an 80-residue protein sequence, read N- to C-terminus: Omega-conotoxin-like 1 (80 aa).

The N-terminal stretch at 1-22 is a signal peptide; sequence MKLTCVLIVVVLFLTACQLITT. The propeptide occupies 23–49; the sequence is DDSTGKQRYQAWKLRSKMQNSVLSRLS. Disulfide bonds link C52-C66, C59-C70, and C65-C79.

The protein belongs to the conotoxin O1 superfamily. Peptide predicted to begin at Arg-51, but it seems more probable that it begins at Cys-52, since this position corresponds to a dibasic residue cleavage. Expressed by the venom duct.

It localises to the secreted. Omega-conotoxins act at presynaptic membranes, they bind and block voltage-gated calcium channels (Cav). This is Omega-conotoxin-like 1 from Conus capitaneus (Captain cone).